Here is a 110-residue protein sequence, read N- to C-terminus: Small ribosomal subunit protein uS17 (110 aa).

It belongs to the universal ribosomal protein uS17 family. Part of the 30S ribosomal subunit.

One of the primary rRNA binding proteins, it binds specifically to the 5'-end of 16S ribosomal RNA. The chain is Small ribosomal subunit protein uS17 from Petrotoga mobilis (strain DSM 10674 / SJ95).